An 889-amino-acid chain; its full sequence is Translation initiation factor IF-2 (889 aa).

2 disordered regions span residues 47-85 and 206-302; these read GHLKKQHGDESEAKPNKLTLNRKTKSTLTMGHGSKAKSV and AEAA…FTKP. Composition is skewed to basic and acidic residues over residues 52–61, 214–241, and 252–263; these read QHGDESEAKP, AAKKLAEENEGRWKEQEAERKAKEKEVV, and AEDKSDSADESG. A tr-type G domain is found at 389 to 558; the sequence is TRAPVVTIMG…LLQSEVLELT (170 aa). The segment at 398–405 is G1; the sequence is GHVDHGKT. 398–405 is a binding site for GTP; that stretch reads GHVDHGKT. A G2 region spans residues 423–427; sequence GITQH. The interval 444-447 is G3; that stretch reads DTPG. GTP is bound by residues 444–448 and 498–501; these read DTPGH and NKMD. The tract at residues 498 to 501 is G4; the sequence is NKMD. Residues 534 to 536 are G5; it reads SAK.

Belongs to the TRAFAC class translation factor GTPase superfamily. Classic translation factor GTPase family. IF-2 subfamily.

It is found in the cytoplasm. In terms of biological role, one of the essential components for the initiation of protein synthesis. Protects formylmethionyl-tRNA from spontaneous hydrolysis and promotes its binding to the 30S ribosomal subunits. Also involved in the hydrolysis of GTP during the formation of the 70S ribosomal complex. This is Translation initiation factor IF-2 from Colwellia psychrerythraea (strain 34H / ATCC BAA-681) (Vibrio psychroerythus).